Reading from the N-terminus, the 540-residue chain is Phosphoenolpyruvate carboxykinase (ATP) (540 aa).

Arginine 65 lines the substrate pocket. N6-acetyllysine is present on lysine 87. Tyrosine 207 and lysine 213 together coordinate substrate. Residues lysine 213, histidine 232, and 248-256 (GLSGTGKTT) each bind ATP. 2 residues coordinate Mn(2+): lysine 213 and histidine 232. Aspartate 269 is a Mn(2+) binding site. ATP is bound by residues glutamate 297, arginine 333, 449–450 (RI), and threonine 455. Substrate is bound at residue arginine 333. Lysine 523 is modified (N6-acetyllysine).

It belongs to the phosphoenolpyruvate carboxykinase (ATP) family. As to quaternary structure, monomer. It depends on Mn(2+) as a cofactor.

The protein resides in the cytoplasm. The enzyme catalyses oxaloacetate + ATP = phosphoenolpyruvate + ADP + CO2. The protein operates within carbohydrate biosynthesis; gluconeogenesis. Its function is as follows. Involved in the gluconeogenesis. Catalyzes the conversion of oxaloacetate (OAA) to phosphoenolpyruvate (PEP) through direct phosphoryl transfer between the nucleoside triphosphate and OAA. This Escherichia fergusonii (strain ATCC 35469 / DSM 13698 / CCUG 18766 / IAM 14443 / JCM 21226 / LMG 7866 / NBRC 102419 / NCTC 12128 / CDC 0568-73) protein is Phosphoenolpyruvate carboxykinase (ATP).